Consider the following 100-residue polypeptide: NADH-quinone oxidoreductase subunit K (100 aa).

The next 3 membrane-spanning stretches (helical) occupy residues 4 to 24, 29 to 49, and 63 to 83; these read ITYYLLLAAALFCMGMFGVLV, LVVFMSVELMLNAANLTFVAF, and FFVIAVAAAEAAIGLAIVIAV.

This sequence belongs to the complex I subunit 4L family. In terms of assembly, NDH-1 is composed of 14 different subunits. Subunits NuoA, H, J, K, L, M, N constitute the membrane sector of the complex.

The protein localises to the cell inner membrane. It catalyses the reaction a quinone + NADH + 5 H(+)(in) = a quinol + NAD(+) + 4 H(+)(out). NDH-1 shuttles electrons from NADH, via FMN and iron-sulfur (Fe-S) centers, to quinones in the respiratory chain. The immediate electron acceptor for the enzyme in this species is believed to be ubiquinone. Couples the redox reaction to proton translocation (for every two electrons transferred, four hydrogen ions are translocated across the cytoplasmic membrane), and thus conserves the redox energy in a proton gradient. This chain is NADH-quinone oxidoreductase subunit K, found in Myxococcus xanthus (strain DK1622).